Here is a 211-residue protein sequence, read N- to C-terminus: Protoglabretal synthase MOI1 (211 aa).

5 consecutive transmembrane segments (helical) span residues 16–36 (ASLH…TWII), 50–70 (LICW…YYVF), 104–124 (VLGI…LAAY), 135–155 (IFQF…FLTA), and 179–199 (IWVI…HAIC). The EXPERA domain occupies 46-188 (IERLLICWWA…IWVIVPMLIA (143 aa)).

Belongs to the EBP family. As to expression, expressed in maturing fruits and in juice vesicles.

The protein localises to the membrane. The catalysed reaction is 7,8-epoxymelianol = protoglabretal. Its pathway is secondary metabolite biosynthesis; terpenoid biosynthesis. Functionally, isomerase involved in the biosynthesis of glabretanes triterpene natural products such as glabretal, a component with in vitro antiproliferative properties on lymphocytes. Catalyzes the conversion of 7,8-epoxymelianol to protoglabretal via skeletal rearrangements. The polypeptide is Protoglabretal synthase MOI1 (Citrus sinensis (Sweet orange)).